A 315-amino-acid chain; its full sequence is Porphobilinogen deaminase (315 aa).

Cysteine 241 carries the post-translational modification S-(dipyrrolylmethanemethyl)cysteine.

The protein belongs to the HMBS family. In terms of assembly, monomer. The cofactor is dipyrromethane.

The enzyme catalyses 4 porphobilinogen + H2O = hydroxymethylbilane + 4 NH4(+). Its pathway is porphyrin-containing compound metabolism; protoporphyrin-IX biosynthesis; coproporphyrinogen-III from 5-aminolevulinate: step 2/4. Its function is as follows. Tetrapolymerization of the monopyrrole PBG into the hydroxymethylbilane pre-uroporphyrinogen in several discrete steps. The protein is Porphobilinogen deaminase of Nitratidesulfovibrio vulgaris (strain ATCC 29579 / DSM 644 / CCUG 34227 / NCIMB 8303 / VKM B-1760 / Hildenborough) (Desulfovibrio vulgaris).